The sequence spans 340 residues: Cathepsin S (340 aa).

The first 17 residues, methionine 1 to leucine 17, serve as a signal peptide directing secretion. Residues valine 18 to threonine 122 constitute a propeptide, activation peptide. Asparagine 120 carries an N-linked (GlcNAc...) asparagine glycan. 4 cysteine pairs are disulfide-bonded: cysteine 134/cysteine 233, cysteine 144/cysteine 189, cysteine 178/cysteine 222, and cysteine 281/cysteine 329. Cysteine 147 is an active-site residue. Residues histidine 287 and asparagine 307 contribute to the active site.

The protein belongs to the peptidase C1 family. Widely expressed with highest expression found in non-skeletal tissues. Relatively high levels found in skeletal tissues. Expressed in spleen, B cells, dendritic cells and macrophages.

The protein localises to the lysosome. It localises to the secreted. Its subcellular location is the cytoplasmic vesicle. The protein resides in the phagosome. The catalysed reaction is Similar to cathepsin L, but with much less activity on Z-Phe-Arg-|-NHMec, and more activity on the Z-Val-Val-Arg-|-Xaa compound.. In terms of biological role, thiol protease. Key protease responsible for the removal of the invariant chain from MHC class II molecules and MHC class II antigen presentation. The bond-specificity of this proteinase is in part similar to the specificities of cathepsin L. The polypeptide is Cathepsin S (Ctss) (Mus musculus (Mouse)).